A 411-amino-acid chain; its full sequence is Translation initiation factor 2 subunit gamma (411 aa).

The tr-type G domain maps to 9-203 (QAEVNIGMVG…AIEDFIPTPK (195 aa)). The tract at residues 18–25 (GHVDHGKT) is G1. Residues D21, T25, G46, and T48 each contribute to the Mg(2+) site. A GTP-binding site is contributed by 21–26 (DHGKTT). A G2 region spans residues 46–50 (GITIK). 4 residues coordinate Zn(2+): C61, C64, C73, and C76. Positions 90-93 (DAPG) are G3. Residues 146 to 149 (NKIE) and 181 to 183 (SAL) contribute to the GTP site. Residues 146 to 149 (NKIE) form a G4 region. Residues 181-183 (SAL) are G5.

This sequence belongs to the TRAFAC class translation factor GTPase superfamily. Classic translation factor GTPase family. EIF2G subfamily. In terms of assembly, heterotrimer composed of an alpha, a beta and a gamma chain. It depends on Mg(2+) as a cofactor.

The enzyme catalyses GTP + H2O = GDP + phosphate + H(+). EIF-2 functions in the early steps of protein synthesis by forming a ternary complex with GTP and initiator tRNA. This is Translation initiation factor 2 subunit gamma from Pyrococcus horikoshii (strain ATCC 700860 / DSM 12428 / JCM 9974 / NBRC 100139 / OT-3).